The following is a 156-amino-acid chain: Arginine repressor (156 aa).

This sequence belongs to the ArgR family.

It localises to the cytoplasm. The protein operates within amino-acid biosynthesis; L-arginine biosynthesis [regulation]. Functionally, regulates arginine biosynthesis genes. The polypeptide is Arginine repressor (Klebsiella pneumoniae (strain 342)).